A 547-amino-acid polypeptide reads, in one-letter code: Fimbria adhesin EcpD (547 aa).

The first 20 residues, 1 to 20 (MRVNLLIAMIIFALIWPATA), serve as a signal peptide directing secretion.

This sequence belongs to the EcpD/MatE family. Forms polymers. Interacts with EcpA.

Its subcellular location is the fimbrium. In terms of biological role, part of the ecpRABCDE operon, which encodes the E.coli common pilus (ECP). ECP is found in both commensal and pathogenic strains and plays a dual role in early-stage biofilm development and host cell recognition. Tip pilus adhesin, which is required for assembly of EcpA into fibers. The sequence is that of Fimbria adhesin EcpD (ecpD) from Escherichia coli O127:H6 (strain E2348/69 / EPEC).